The chain runs to 67 residues: Potassium channel toxin alpha-KTx 6.16 (67 aa).

An N-terminal signal peptide occupies residues 1-24 (MNLKLALVLLLTVINVGMLPGATS). 4 disulfide bridges follow: Cys-34–Cys-55, Cys-40–Cys-60, Cys-44–Cys-62, and Cys-50–Cys-65.

The protein belongs to the short scorpion toxin superfamily. Potassium channel inhibitor family. Alpha-KTx 06 subfamily. Expressed by the venom gland.

It is found in the secreted. Inhibits voltage-gated potassium channels. The chain is Potassium channel toxin alpha-KTx 6.16 from Opisthacanthus cayaporum (South American scorpion).